The primary structure comprises 136 residues: ATP synthase epsilon chain (136 aa).

The protein belongs to the ATPase epsilon chain family. In terms of assembly, F-type ATPases have 2 components, CF(1) - the catalytic core - and CF(0) - the membrane proton channel. CF(1) has five subunits: alpha(3), beta(3), gamma(1), delta(1), epsilon(1). CF(0) has three main subunits: a, b and c.

Its subcellular location is the cell inner membrane. Produces ATP from ADP in the presence of a proton gradient across the membrane. The chain is ATP synthase epsilon chain from Agrobacterium fabrum (strain C58 / ATCC 33970) (Agrobacterium tumefaciens (strain C58)).